The following is a 409-amino-acid chain: Tryptophan synthase beta chain (409 aa).

Residue K104 is modified to N6-(pyridoxal phosphate)lysine.

The protein belongs to the TrpB family. As to quaternary structure, tetramer of two alpha and two beta chains. It depends on pyridoxal 5'-phosphate as a cofactor.

It catalyses the reaction (1S,2R)-1-C-(indol-3-yl)glycerol 3-phosphate + L-serine = D-glyceraldehyde 3-phosphate + L-tryptophan + H2O. It participates in amino-acid biosynthesis; L-tryptophan biosynthesis; L-tryptophan from chorismate: step 5/5. Its function is as follows. The beta subunit is responsible for the synthesis of L-tryptophan from indole and L-serine. The polypeptide is Tryptophan synthase beta chain (Trichodesmium erythraeum (strain IMS101)).